Here is a 468-residue protein sequence, read N- to C-terminus: Argininosuccinate lyase (468 aa).

It belongs to the lyase 1 family. Argininosuccinate lyase subfamily.

It is found in the cytoplasm. It carries out the reaction 2-(N(omega)-L-arginino)succinate = fumarate + L-arginine. The protein operates within amino-acid biosynthesis; L-arginine biosynthesis; L-arginine from L-ornithine and carbamoyl phosphate: step 3/3. In Paraburkholderia phytofirmans (strain DSM 17436 / LMG 22146 / PsJN) (Burkholderia phytofirmans), this protein is Argininosuccinate lyase.